A 506-amino-acid polypeptide reads, in one-letter code: 2,3-bisphosphoglycerate-independent phosphoglycerate mutase (506 aa).

Mn(2+) contacts are provided by Asp13 and Ser63. The active-site Phosphoserine intermediate is Ser63. Substrate-binding positions include His124, 153–154, Arg183, Arg189, 254–257, and Lys330; these read RD and RADR. Mn(2+) contacts are provided by Asp396, His400, Asp437, His438, and His456.

The protein belongs to the BPG-independent phosphoglycerate mutase family. In terms of assembly, monomer. The cofactor is Mn(2+).

It catalyses the reaction (2R)-2-phosphoglycerate = (2R)-3-phosphoglycerate. Its pathway is carbohydrate degradation; glycolysis; pyruvate from D-glyceraldehyde 3-phosphate: step 3/5. Functionally, catalyzes the interconversion of 2-phosphoglycerate and 3-phosphoglycerate. This is 2,3-bisphosphoglycerate-independent phosphoglycerate mutase from Cereibacter sphaeroides (strain ATCC 17029 / ATH 2.4.9) (Rhodobacter sphaeroides).